The following is an 880-amino-acid chain: Alanine--tRNA ligase (880 aa).

Residues His563, His567, Cys673, and His677 each contribute to the Zn(2+) site.

The protein belongs to the class-II aminoacyl-tRNA synthetase family. Zn(2+) is required as a cofactor.

Its subcellular location is the cytoplasm. It carries out the reaction tRNA(Ala) + L-alanine + ATP = L-alanyl-tRNA(Ala) + AMP + diphosphate. Its function is as follows. Catalyzes the attachment of alanine to tRNA(Ala) in a two-step reaction: alanine is first activated by ATP to form Ala-AMP and then transferred to the acceptor end of tRNA(Ala). Also edits incorrectly charged Ser-tRNA(Ala) and Gly-tRNA(Ala) via its editing domain. This is Alanine--tRNA ligase from Caulobacter vibrioides (strain ATCC 19089 / CIP 103742 / CB 15) (Caulobacter crescentus).